The chain runs to 253 residues: HTH-type transcriptional regulator YdeO (253 aa).

Positions 137-233 (GKVRNIVNMK…GNSPKRVSKE (97 aa)) constitute an HTH araC/xylS-type domain. DNA-binding regions (H-T-H motif) lie at residues 154 to 175 (KDIC…KQEQ) and 200 to 223 (VNKI…RKHF).

Its function is as follows. Induces the expression of gadE and mdtEF. Could also regulate the expression of other genes involved in acid resistance. The polypeptide is HTH-type transcriptional regulator YdeO (Escherichia coli O157:H7).